Consider the following 74-residue polypeptide: Cell division protein ZapB (74 aa).

The stretch at 2 to 74 (TLDLLEQLES…LVGKIEETES (73 aa)) forms a coiled coil.

It belongs to the ZapB family. Homodimer. The ends of the coiled-coil dimer bind to each other, forming polymers. Interacts with FtsZ.

It localises to the cytoplasm. Its function is as follows. Non-essential, abundant cell division factor that is required for proper Z-ring formation. It is recruited early to the divisome by direct interaction with FtsZ, stimulating Z-ring assembly and thereby promoting cell division earlier in the cell cycle. Its recruitment to the Z-ring requires functional FtsA or ZipA. In Psychromonas ingrahamii (strain DSM 17664 / CCUG 51855 / 37), this protein is Cell division protein ZapB.